A 459-amino-acid chain; its full sequence is LETM1 domain-containing protein LETM2, mitochondrial (459 aa).

The N-terminal 25 residues, 1-25 (MAFYSYNSFLAIFWTRLPGHSVHPP), are a transit peptide targeting the mitochondrion. Over 26–176 (CSHFPPLAFF…LLRTCADVFR (151 aa)) the chain is Mitochondrial intermembrane. The segment at 88–114 (GKPQPEQIPEEPKATDPQPTKDDQTEV) is disordered. Positions 97-111 (EEPKATDPQPTKDDQ) are enriched in basic and acidic residues. A helical transmembrane segment spans residues 177–197 (LVPFVVFIIVPFMEFLIPVFL). The Mitochondrial matrix portion of the chain corresponds to 198-459 (KLFPDMLPST…QNSKANSKGA (262 aa)). One can recognise a Letm1 RBD domain in the interval 220–440 (KMMGAKLEIA…PAPQLNGTKI (221 aa)). Positions 403–459 (LPPSIETPKTNLGIPSSPPPESKEDITDPAPQLNGTKILQAKSQETSQNSKANSKGA) are disordered. Residues 435 to 459 (LNGTKILQAKSQETSQNSKANSKGA) show a composition bias toward polar residues.

As to expression, testis and sperm.

It is found in the mitochondrion inner membrane. The sequence is that of LETM1 domain-containing protein LETM2, mitochondrial (Letm2) from Rattus norvegicus (Rat).